The chain runs to 232 residues: Thiamine import ATP-binding protein ThiQ (232 aa).

The 229-residue stretch at 2–230 folds into the ABC transporter domain; it reads LKLTDITWLY…KASASAILGI (229 aa). Position 32–39 (32–39) interacts with ATP; sequence GPSGAGKS.

Belongs to the ABC transporter superfamily. Thiamine importer (TC 3.A.1.19.1) family. As to quaternary structure, the complex is composed of two ATP-binding proteins (ThiQ), two transmembrane proteins (ThiP) and a solute-binding protein (ThiB).

The protein resides in the cell inner membrane. The catalysed reaction is thiamine(out) + ATP + H2O = thiamine(in) + ADP + phosphate + H(+). Functionally, part of the ABC transporter complex ThiBPQ involved in thiamine import. Responsible for energy coupling to the transport system. This Shigella boydii serotype 4 (strain Sb227) protein is Thiamine import ATP-binding protein ThiQ.